The sequence spans 275 residues: Fructose permease IID component (275 aa).

A PTS EIID domain is found at 5–274; the sequence is KRLTKKEIFS…GILGYWAGFL (270 aa). The next 5 membrane-spanning stretches (helical) occupy residues 100 to 120, 127 to 147, 187 to 207, 227 to 247, and 255 to 275; these read MKIG…WGTI, LGAS…FFLL, ILGL…NIPI, VLDS…VAWM, and LLII…GFLA.

Its subcellular location is the cell membrane. The phosphoenolpyruvate-dependent sugar phosphotransferase system (PTS), a major carbohydrate active -transport system, catalyzes the phosphorylation of incoming sugar substrates concomitant with their translocation across the cell membrane. This system is involved in fructose transport. This is Fructose permease IID component (levG) from Bacillus subtilis (strain 168).